The following is a 136-amino-acid chain: Ribosome-binding factor A (136 aa).

The disordered stretch occupies residues 1-22 (MNTAGPAGKLAGHAASGPTQRQ).

It belongs to the RbfA family. In terms of assembly, monomer. Binds 30S ribosomal subunits, but not 50S ribosomal subunits or 70S ribosomes.

It localises to the cytoplasm. One of several proteins that assist in the late maturation steps of the functional core of the 30S ribosomal subunit. Associates with free 30S ribosomal subunits (but not with 30S subunits that are part of 70S ribosomes or polysomes). Required for efficient processing of 16S rRNA. May interact with the 5'-terminal helix region of 16S rRNA. The sequence is that of Ribosome-binding factor A from Gluconacetobacter diazotrophicus (strain ATCC 49037 / DSM 5601 / CCUG 37298 / CIP 103539 / LMG 7603 / PAl5).